Here is a 447-residue protein sequence, read N- to C-terminus: Tubulin beta-1 chain (447 aa).

GTP is bound by residues Gln-11, Glu-69, Ser-138, Gly-142, Thr-143, Gly-144, Asn-204, and Asn-226. Glu-69 is a binding site for Mg(2+). A disordered region spans residues 424 to 447 (QYQDATAEEEGEGDEEEAEGEAAA). The span at 429–447 (TAEEEGEGDEEEAEGEAAA) shows a compositional bias: acidic residues.

It belongs to the tubulin family. Dimer of alpha and beta chains. A typical microtubule is a hollow water-filled tube with an outer diameter of 25 nm and an inner diameter of 15 nM. Alpha-beta heterodimers associate head-to-tail to form protofilaments running lengthwise along the microtubule wall with the beta-tubulin subunit facing the microtubule plus end conferring a structural polarity. Microtubules usually have 13 protofilaments but different protofilament numbers can be found in some organisms and specialized cells. Mg(2+) is required as a cofactor.

It is found in the cytoplasm. It localises to the cytoskeleton. Functionally, tubulin is the major constituent of microtubules, a cylinder consisting of laterally associated linear protofilaments composed of alpha- and beta-tubulin heterodimers. Microtubules grow by the addition of GTP-tubulin dimers to the microtubule end, where a stabilizing cap forms. Below the cap, tubulin dimers are in GDP-bound state, owing to GTPase activity of alpha-tubulin. This chain is Tubulin beta-1 chain (TUBB1), found in Cyanophora paradoxa.